The chain runs to 492 residues: MAPGGGRGSKTASYGNSDFVVVANRLPVDQERLPDGSTAWKRSPGGLVTALEPLLRRQRGAWVGWPGIVDEDVDHEDDPIVQDDLELRPVKLSADDVAEYYEGFSNATLWPLYHDVIVKPIYHREWWDRYVAVNRRFAEATSRAAARGATVWVQDYQLQLVPAMLRELRPDLTIGFFLHIPFPPVELFMQLPWRTEIVKGLLGADLVGFHLTGGAQNFLFLSRRLIGANTSRGAVGVRSRYGEVELESRVVRVGAFPISIDSTALDQTARHRDIRRRAREIRAELGNPRKVLLGVDRLDYTKGIDVRLKAFSELLAEGRAKRDDTVLVQLATPSRERVDSYQQLRNDIERQVGHINGEYGEVGHPVVHYLHRPVPRNELIAFFVAADVMLVTPLRDGMNLVAKEYVACRSDLGGALVLSEFTGAAAELRQAYLVNPHDLEGVKDTVEAALNQSVEEGRRRMRSLRRQVLAHDVDRWARSFLDALAESGPRDG.

Arginine 25 provides a ligand contact to D-glucose 6-phosphate. UDP-alpha-D-glucose is bound at residue 45–46 (GG). D-glucose 6-phosphate contacts are provided by tyrosine 101 and aspartate 155. 2 residues coordinate UDP-alpha-D-glucose: arginine 297 and lysine 302. Arginine 335 contacts D-glucose 6-phosphate. 400-404 (LVAKE) is a binding site for UDP-alpha-D-glucose.

This sequence belongs to the glycosyltransferase 20 family. In terms of assembly, homotetramer.

The catalysed reaction is ADP-alpha-D-glucose + D-glucose 6-phosphate = alpha,alpha-trehalose 6-phosphate + ADP + H(+). The enzyme catalyses CDP-alpha-D-glucose + D-glucose 6-phosphate = alpha,alpha-trehalose 6-phosphate + CDP + H(+). It catalyses the reaction GDP-alpha-D-glucose + D-glucose 6-phosphate = alpha,alpha-trehalose 6-phosphate + GDP + H(+). It carries out the reaction TDP-alpha-D-glucose + D-glucose 6-phosphate = 5-methyl-UDP + alpha,alpha-trehalose 6-phosphate + H(+). The catalysed reaction is D-glucose 6-phosphate + UDP-alpha-D-glucose = alpha,alpha-trehalose 6-phosphate + UDP + H(+). It functions in the pathway glycan biosynthesis; trehalose biosynthesis. Functionally, probably involved in the osmoprotection via the biosynthesis of trehalose and in the production of glycogen and alpha-glucan via the TreS-Pep2 branch involved in the biosynthesis of maltose-1-phosphate (M1P). Catalyzes the transfer of glucose from UDP-glucose (UDP-Glc) to D-glucose 6-phosphate (Glc-6-P) to form trehalose-6-phosphate. Probably also able to use ADP-Glc, CDP-Glc, GDP-Glc and TDP-Glc as glucosyl donors. The sequence is that of Trehalose-6-phosphate synthase from Mycobacterium avium (strain 104).